The following is a 440-amino-acid chain: Thymidine phosphorylase (440 aa).

It belongs to the thymidine/pyrimidine-nucleoside phosphorylase family. In terms of assembly, homodimer.

The catalysed reaction is thymidine + phosphate = 2-deoxy-alpha-D-ribose 1-phosphate + thymine. It participates in pyrimidine metabolism; dTMP biosynthesis via salvage pathway; dTMP from thymine: step 1/2. In terms of biological role, the enzymes which catalyze the reversible phosphorolysis of pyrimidine nucleosides are involved in the degradation of these compounds and in their utilization as carbon and energy sources, or in the rescue of pyrimidine bases for nucleotide synthesis. This chain is Thymidine phosphorylase, found in Escherichia coli O139:H28 (strain E24377A / ETEC).